Here is a 197-residue protein sequence, read N- to C-terminus: CASP-like protein 0U1 (197 aa).

At 1 to 13 the chain is on the cytoplasmic side; that stretch reads MDDFDPTVTNSPK. The chain crosses the membrane as a helical span at residues 14-34; the sequence is FRLIAVQCLFSITAFAAMLSQ. Topologically, residues 35–63 are extracellular; sequence RHGLAGPDEMTLEECGPQACGYQKFSNFK. A helical transmembrane segment spans residues 64–84; that stretch reads FLIAVCIIYAVFSLVVMAAYL. Topologically, residues 85–99 are cytoplasmic; it reads LQRVPPPVTELTAYT. A helical membrane pass occupies residues 100-120; that stretch reads VMNVLLFAAFAMSATSCNITI. The Extracellular portion of the chain corresponds to 121–135; that stretch reads VDPVYPVCKRATSAK. Residues 136–156 traverse the membrane as a helical segment; the sequence is ASIAFAFFTWLAVCFSMLFTY. At 157–197 the chain is on the cytoplasmic side; sequence KEWRDVDYHVPGSGAYEFVPGVTSGSSRSSYPPQASSSSYA. The tract at residues 178–197 is disordered; it reads VTSGSSRSSYPPQASSSSYA. Over residues 180 to 197 the composition is skewed to low complexity; sequence SGSSRSSYPPQASSSSYA.

This sequence belongs to the Casparian strip membrane proteins (CASP) family. Homodimer and heterodimers.

It is found in the cell membrane. This Micromonas commoda (strain RCC299 / NOUM17 / CCMP2709) (Picoplanktonic green alga) protein is CASP-like protein 0U1.